Consider the following 726-residue polypeptide: Kinesin-like protein KIN-10B (726 aa).

Disordered regions lie at residues 1–20 (MEQQQKQEPGGGGGGVRVVA), 60–82 (AATAAASGRGDGPKDKQQQQQQK), and 402–423 (KNARPGFNNSGVKGGQTPTANR). Positions 15–359 (GVRVVARICP…LALASRSSQV (345 aa)) constitute a Kinesin motor domain. Residues 408–423 (FNNSGVKGGQTPTANR) are compositionally biased toward polar residues.

The protein belongs to the TRAFAC class myosin-kinesin ATPase superfamily. Kinesin family. KIN-10 subfamily.

In Oryza sativa subsp. japonica (Rice), this protein is Kinesin-like protein KIN-10B.